A 287-amino-acid chain; its full sequence is Isopentenyl-diphosphate Delta-isomerase 1, chloroplastic (287 aa).

Residues 1–51 constitute a chloroplast transit peptide; that stretch reads MTLLLNTTAKLYIAPRTLPFTSSSTFARSPFLRIPSLLKPLSPLTARVSLS. Residue lysine 90 coordinates substrate. Histidine 94 and histidine 106 together coordinate Mg(2+). Residues 104–256 enclose the Nudix hydrolase domain; that stretch reads LLHRAFSVFL…GLKLSPWFRL (153 aa). 2 residues coordinate substrate: arginine 125 and lysine 129. Cysteine 141 is a catalytic residue. A substrate-binding site is contributed by serine 142. The Nudix box signature appears at 142 to 172; it reads SHPLYRESELIDEESLGARNAAQRKLLDELG. 2 residues coordinate Mg(2+): glutamate 201 and glutamate 203. Glutamate 203 is a catalytic residue.

It belongs to the IPP isomerase type 1 family. In terms of assembly, monomer. Mg(2+) is required as a cofactor. In terms of tissue distribution, mainly expressed in roots and trichomes and, to a lower extent, in leaves, flowers and stems.

It localises to the plastid. Its subcellular location is the chloroplast. The catalysed reaction is isopentenyl diphosphate = dimethylallyl diphosphate. It functions in the pathway isoprenoid biosynthesis; dimethylallyl diphosphate biosynthesis; dimethylallyl diphosphate from isopentenyl diphosphate: step 1/1. The protein operates within porphyrin-containing compound metabolism; chlorophyll biosynthesis. Its function is as follows. Catalyzes the 1,3-allylic rearrangement of the homoallylic substrate isopentenyl (IPP) to its highly electrophilic allylic isomer, dimethylallyl diphosphate (DMAPP). This Cannabis sativa (Hemp) protein is Isopentenyl-diphosphate Delta-isomerase 1, chloroplastic.